The chain runs to 499 residues: Maturase K (499 aa).

This sequence belongs to the intron maturase 2 family. MatK subfamily.

It is found in the plastid. The protein resides in the chloroplast. Usually encoded in the trnK tRNA gene intron. Probably assists in splicing its own and other chloroplast group II introns. This chain is Maturase K, found in Gymnocladus chinensis (Soap tree).